A 109-amino-acid chain; its full sequence is Ferredoxin (109 aa).

4Fe-4S ferredoxin-type domains lie at 2–30 (TYVV…YEGE) and 31–60 (FMLV…PESP). Cys-9 and Cys-17 together coordinate [3Fe-4S] cluster. [4Fe-4S] cluster contacts are provided by Cys-21, Cys-40, Cys-43, and Cys-46. Position 50 (Cys-50) interacts with [3Fe-4S] cluster.

[4Fe-4S] cluster is required as a cofactor. [3Fe-4S] cluster serves as cofactor.

Ferredoxins are iron-sulfur proteins that transfer electrons in a wide variety of metabolic reactions. This Rickettsia prowazekii (strain Madrid E) protein is Ferredoxin (fdxA).